Here is a 733-residue protein sequence, read N- to C-terminus: Catalase-peroxidase (733 aa).

Residues 1–24 are disordered; that stretch reads MTDDSTCPVTGGADKQVTGRGQSY. A cross-link (tryptophyl-tyrosyl-methioninium (Trp-Tyr) (with M-245)) is located at residues 96–219; that stretch reads WHSAGTYRTL…LAAVQMGLIY (124 aa). The active-site Proton acceptor is the histidine 97. Residues 219–245 constitute a cross-link (tryptophyl-tyrosyl-methioninium (Tyr-Met) (with W-96)); sequence YVNPEGPNGKPDPVAAAKDIRETFARM. Heme b is bound at residue histidine 260.

It belongs to the peroxidase family. Peroxidase/catalase subfamily. In terms of assembly, homodimer or homotetramer. Requires heme b as cofactor. Post-translationally, formation of the three residue Trp-Tyr-Met cross-link is important for the catalase, but not the peroxidase activity of the enzyme.

The enzyme catalyses H2O2 + AH2 = A + 2 H2O. The catalysed reaction is 2 H2O2 = O2 + 2 H2O. Functionally, bifunctional enzyme with both catalase and broad-spectrum peroxidase activity. The chain is Catalase-peroxidase from Methanoregula boonei (strain DSM 21154 / JCM 14090 / 6A8).